The sequence spans 595 residues: Adenine deaminase 2 (595 aa).

Belongs to the metallo-dependent hydrolases superfamily. Adenine deaminase family. Requires Mn(2+) as cofactor.

The catalysed reaction is adenine + H2O + H(+) = hypoxanthine + NH4(+). This Rhizobium johnstonii (strain DSM 114642 / LMG 32736 / 3841) (Rhizobium leguminosarum bv. viciae) protein is Adenine deaminase 2.